A 295-amino-acid chain; its full sequence is MELIQDTSRPPLEYVKGVPLIKYFAEALGPLQSFQARPDDLLISTYPKSGTTWVSQILDMIYQGGDLEKCHRAPIFMRVPFLEFKAPGIPSGMETLKDTPAPRLLKTHLPLALLPQTLLDQKVKVVYVARNAKDVAVSYYHFYHMAKVHPEPGTWDSFLEKFMVGEVSYGSWYQHVQEWWELSRTHPVLYLFYEDMKENPKREIQKILEFVGRSLPEETVDFVVQHTSFKEMKKNPMTNYTTVPQEFMDHSISPFMRKGMAGDWKTTFTVAQNERFDADYAEKMAGCSLSFRSEL.

Residue lysine 48–tryptophan 53 coordinates 3'-phosphoadenylyl sulfate. Position 106–108 (lysine 106–histidine 108) interacts with substrate. The active-site Proton acceptor is the histidine 108. 3'-phosphoadenylyl sulfate-binding positions include arginine 130, serine 138, tyrosine 193, threonine 227 to methionine 232, and phenylalanine 255 to glycine 259. Position 138 is a phosphoserine (serine 138).

It belongs to the sulfotransferase 1 family. In terms of assembly, homodimer. Liver, lung, adrenal, brain, platelets and skin.

The protein localises to the cytoplasm. It carries out the reaction a phenol + 3'-phosphoadenylyl sulfate = an aryl sulfate + adenosine 3',5'-bisphosphate + H(+). The catalysed reaction is 17beta-estradiol + 3'-phosphoadenylyl sulfate = 17beta-estradiol 3-sulfate + adenosine 3',5'-bisphosphate + H(+). The enzyme catalyses 4-ethylphenol + 3'-phosphoadenylyl sulfate = 4-ethylphenyl sulfate + adenosine 3',5'-bisphosphate + H(+). It catalyses the reaction 4-nitrophenol + 3'-phosphoadenylyl sulfate = 4-nitrophenyl sulfate + adenosine 3',5'-bisphosphate. It carries out the reaction dopamine + 3'-phosphoadenylyl sulfate = dopamine 3-O-sulfate + adenosine 3',5'-bisphosphate + H(+). The catalysed reaction is dopamine + 3'-phosphoadenylyl sulfate = dopamine 4-O-sulfate + adenosine 3',5'-bisphosphate + H(+). The enzyme catalyses 3,3',5-triiodo-L-thyronine + 3'-phosphoadenylyl sulfate = 3,3',5-triiodo-L-thyronine sulfate + adenosine 3',5'-bisphosphate + H(+). It catalyses the reaction 3,3',5'-triiodo-L-thyronine + 3'-phosphoadenylyl sulfate = 3,3',5'-triiodo-L-thyronine sulfate + adenosine 3',5'-bisphosphate + H(+). It carries out the reaction 3,3'-diiodo-L-thyronine + 3'-phosphoadenylyl sulfate = 3,3'-diiodo-L-thyronine sulfate + adenosine 3',5'-bisphosphate + H(+). The catalysed reaction is L-thyroxine + 3'-phosphoadenylyl sulfate = L-thyroxine sulfate + adenosine 3',5'-bisphosphate + H(+). Sulfotransferase that utilizes 3'-phospho-5'-adenylyl sulfate (PAPS) as sulfonate donor to catalyze the sulfate conjugation of a wide variety of acceptor molecules bearing a hydroxyl or an amine group. Sulfonation increases the water solubility of most compounds, and therefore their renal excretion, but it can also result in bioactivation to form active metabolites. Displays broad substrate specificity for small phenolic compounds. Plays an important role in the sulfonation of endogenous molecules such as steroid hormones. Mediates the sulfate conjugation of a variety of xenobiotics, including the drugs acetaminophen and minoxidil. Mediates also the metabolic activation of carcinogenic N-hydroxyarylamines leading to highly reactive intermediates capable of forming DNA adducts, potentially resulting in mutagenesis. May play a role in gut microbiota-host metabolic interaction. O-sulfonates 4-ethylphenol (4-EP), a dietary tyrosine-derived metabolite produced by gut bacteria. The product 4-EPS crosses the blood-brain barrier and may negatively regulate oligodendrocyte maturation and myelination, affecting the functional connectivity of different brain regions associated with the limbic system. Catalyzes the sulfate conjugation of dopamine. Catalyzes the sulfation of T4 (L-thyroxine/3,5,3',5'-tetraiodothyronine), T3 (3,5,3'-triiodothyronine), rT3 (3,3',5'-triiodothyronine) and 3,3'-T2 (3,3'-diiodothyronine), with a substrate preference of 3,3'-T2 &gt; rT3 &gt; T3 &gt; T4. The sequence is that of Sulfotransferase 1A1 (SULT1A1) from Homo sapiens (Human).